A 281-amino-acid chain; its full sequence is Leukocyte antigen CD37 (281 aa).

The Cytoplasmic portion of the chain corresponds to 1–17 (MSAQESCLSLIKYFLFV). Residues 18-38 (FNLFFFVLGGLIFCFGTWILI) form a helical membrane-spanning segment. Topologically, residues 39–59 (DKTSFVSFVGLSFVPLQTWSK) are extracellular. A helical membrane pass occupies residues 60–74 (VLSVSGVLTMALALL). Residues 75–85 (GCVGALKELRC) are Cytoplasmic-facing. A helical membrane pass occupies residues 86–111 (LLGLYFGMLLLLFATQITLGILISTQ). Topologically, residues 112-241 (RVRLERRVQE…RSLQKWLHNN (130 aa)) are extracellular. N170, N183, and N188 each carry an N-linked (GlcNAc...) asparagine glycan. A helical transmembrane segment spans residues 242–266 (IISIVGICLGVGLLELGFMTLSIFL). Residues 267–281 (CRNLDHVYDRLARYR) are Cytoplasmic-facing.

Belongs to the tetraspanin (TM4SF) family. Interacts with SCIMP. Interacts with SOCS3. Interacts with DECTIN1/CLEC7A. In terms of processing, tyrosine phosphorylated; leading to activation of downstream signaling pathways. B-lymphocytes.

Its subcellular location is the cell membrane. Functionally, structural component of specialized membrane microdomains known as tetraspanin-enriched microdomains (TERMs), which act as platforms for receptor clustering and signaling. Participates thereby in diverse biological functions such as cell signal transduction, adhesion, migration and protein trafficking. Upon ligand binding, two signaling pathways are activated, one acting through phosphorylation by LYN leading to cell death or a survival pathway with activation of GSK3B. Plays an essential role essential for clustering of integrin ITGA4/ITGB1 and promotes its mobility in the plasma membrane of B-cells. In turn, participates in ITGA4/ITGB1 integrin-mediated antiapoptotic signaling through AKT. Plays also a role in the migration of dendritic cells and neutrophils to draining lymph nodes, as well as in their integrin-mediated adhesion. Negatively regulates IL-6 responses through direct interaction with SOCS3 thereby preventing constitutive IL-6 signaling. Alternatively, inhibition of IL-6 signaling can also occur via interaction and stabilization of DECTIN1/CLEC7A at the cell membrane to inhibit its ability to promote the production of IL-6. This is Leukocyte antigen CD37 (Cd37) from Rattus norvegicus (Rat).